The following is a 416-amino-acid chain: Imidazolonepropionase (416 aa).

Residues histidine 82 and histidine 84 each contribute to the Fe(3+) site. Positions 82 and 84 each coordinate Zn(2+). 4-imidazolone-5-propanoate is bound by residues arginine 91, tyrosine 154, and histidine 187. Tyrosine 154 lines the N-formimidoyl-L-glutamate pocket. Position 252 (histidine 252) interacts with Fe(3+). Position 252 (histidine 252) interacts with Zn(2+). Glutamate 255 serves as a coordination point for 4-imidazolone-5-propanoate. Residue aspartate 326 participates in Fe(3+) binding. Aspartate 326 is a binding site for Zn(2+). 2 residues coordinate N-formimidoyl-L-glutamate: asparagine 328 and glycine 330. Serine 331 provides a ligand contact to 4-imidazolone-5-propanoate.

Belongs to the metallo-dependent hydrolases superfamily. HutI family. Zn(2+) serves as cofactor. Fe(3+) is required as a cofactor.

The protein localises to the cytoplasm. It catalyses the reaction 4-imidazolone-5-propanoate + H2O = N-formimidoyl-L-glutamate. Its pathway is amino-acid degradation; L-histidine degradation into L-glutamate; N-formimidoyl-L-glutamate from L-histidine: step 3/3. Functionally, catalyzes the hydrolytic cleavage of the carbon-nitrogen bond in imidazolone-5-propanoate to yield N-formimidoyl-L-glutamate. It is the third step in the universal histidine degradation pathway. The protein is Imidazolonepropionase of Parabacteroides distasonis (strain ATCC 8503 / DSM 20701 / CIP 104284 / JCM 5825 / NCTC 11152).